The primary structure comprises 146 residues: Large ribosomal subunit protein uL15 (146 aa).

Residues 1 to 54 (MKLHELKPAAGSRKAPKRVGRGTGSGLGRNAGKGEKGQNARSGGGVRPGFEGGQ) are disordered. Gly residues-rich tracts occupy residues 21 to 31 (RGTGSGLGRNA) and 42 to 52 (SGGGVRPGFEG).

This sequence belongs to the universal ribosomal protein uL15 family. In terms of assembly, part of the 50S ribosomal subunit.

In terms of biological role, binds to the 23S rRNA. The protein is Large ribosomal subunit protein uL15 of Clostridium acetobutylicum (strain ATCC 824 / DSM 792 / JCM 1419 / IAM 19013 / LMG 5710 / NBRC 13948 / NRRL B-527 / VKM B-1787 / 2291 / W).